Reading from the N-terminus, the 200-residue chain is Late embryogenesis abundant protein 19 (200 aa).

2 disordered regions span residues 1 to 145 and 172 to 200; these read MASH…KTGS and TEDE…ARDH. Basic and acidic residues-rich tracts occupy residues 13-23, 30-42, 53-81, 88-97, and 105-114; these read GETKAHTEEKA, SKDK…DRAS, QDTK…KDKT, ARDKAAESKD, and EKTEQAKQKA. Residues 52–81 adopt a coiled-coil conformation; sequence GQDTKEATKEKAQAAKERASETAQAAKDKT. 2 stretches are compositionally biased toward low complexity: residues 115–130 and 186–200; these read AETA…ETAQ and TSAT…ARDH.

It belongs to the LEA type 4 family.

Involved in response to stress. The sequence is that of Late embryogenesis abundant protein 19 from Oryza sativa subsp. japonica (Rice).